A 332-amino-acid polypeptide reads, in one-letter code: Diaminopimelate epimerase (332 aa).

Substrate contacts are provided by Asn13 and Asn73. Cys82 acts as the Proton donor in catalysis. Substrate contacts are provided by residues 83–84 (GN), Asn172, Asn209, and 227–228 (ER). Cys236 serves as the catalytic Proton acceptor. Residue 237–238 (GT) coordinates substrate.

Belongs to the diaminopimelate epimerase family. As to quaternary structure, homodimer.

The protein localises to the cytoplasm. It catalyses the reaction (2S,6S)-2,6-diaminopimelate = meso-2,6-diaminopimelate. Its pathway is amino-acid biosynthesis; L-lysine biosynthesis via DAP pathway; DL-2,6-diaminopimelate from LL-2,6-diaminopimelate: step 1/1. In terms of biological role, catalyzes the stereoinversion of LL-2,6-diaminopimelate (L,L-DAP) to meso-diaminopimelate (meso-DAP), a precursor of L-lysine and an essential component of the bacterial peptidoglycan. The chain is Diaminopimelate epimerase from Lactiplantibacillus plantarum (strain ATCC BAA-793 / NCIMB 8826 / WCFS1) (Lactobacillus plantarum).